The sequence spans 347 residues: Metacaspase-2 (347 aa).

Residues 1 to 55 (MCSLITQLCDAGQLADYVGLGWLNAVSSQPYLVQALGLQPPPRRVDVDAAFRDAK) constitute a propeptide that is removed on maturation. The regulates substrate access to the active site stretch occupies residues 1 to 70 (MCSLITQLCD…QPWVATPLPG (70 aa)). H158 is an active-site residue. The Ca(2+) site is built by D173, D189, and D190. C213 is a catalytic residue. A Ca(2+)-binding site is contributed by D220.

It belongs to the peptidase C14B family. In terms of assembly, monomer. In terms of processing, auto-proteolytic cleavage of the propeptide after Lys-55 and between the large and small subunits after Lys-268 is required for catalytic activity towards large protein substrates but is dispensable towards small oligopeptide substrates. After processing, the propeptide and the large and small subunits remain associated by non-covalent bonds. In vivo, the unprocessed enzyme appears to be the predominant form.

It localises to the recycling endosome. Its activity is regulated as follows. Activated by Ca(2+). In response to calcium binding, the 280-loop, a disordered loop consisting of residues 269-275, undergoes a conformational change which stabilizes substrates in the active site. The binding to the substrate triggers the release of the N-terminal region resulting in the activation of the enzyme. Proteolytic cleavage is required for catalytic activity towards large protein substrates. Functionally, cysteine protease that cleaves specifically after arginine or lysine residues. This is Metacaspase-2 from Trypanosoma brucei brucei (strain 927/4 GUTat10.1).